The following is a 604-amino-acid chain: Glutamine--fructose-6-phosphate aminotransferase [isomerizing] (604 aa).

Cys2 (nucleophile; for GATase activity) is an active-site residue. In terms of domain architecture, Glutamine amidotransferase type-2 spans 2–218; the sequence is CGIVGVVGNR…DKELVILTKD (217 aa). SIS domains are found at residues 284-423 and 456-594; these read IITS…ANGK and VQAL…VDKP. Catalysis depends on Lys599, which acts as the For Fru-6P isomerization activity.

In terms of assembly, homodimer.

Its subcellular location is the cytoplasm. The enzyme catalyses D-fructose 6-phosphate + L-glutamine = D-glucosamine 6-phosphate + L-glutamate. Its function is as follows. Catalyzes the first step in hexosamine metabolism, converting fructose-6P into glucosamine-6P using glutamine as a nitrogen source. This Streptococcus pyogenes serotype M1 protein is Glutamine--fructose-6-phosphate aminotransferase [isomerizing].